Here is a 422-residue protein sequence, read N- to C-terminus: Elongation factor 1-gamma (422 aa).

The region spanning 1–82 is the GST N-terminal domain; it reads MALVLHAGKT…YVARLKADNP (82 aa). The region spanning 87 to 215 is the GST C-terminal domain; that stretch reads SLIDYAHIEQ…VKQTESVPPV (129 aa). The tract at residues 210–269 is disordered; that stretch reads ESVPPVPSAKKPSQPKETKSKAKEEPKKEAKKEPAKPKAEAAEEVEEAPKPKPKNPLDLL. The segment covering 223–250 has biased composition (basic and acidic residues); sequence QPKETKSKAKEEPKKEAKKEPAKPKAEA. Residues 262–422 form the EF-1-gamma C-terminal domain; sequence PKNPLDLLPP…EALLDAKCFK (161 aa).

EF-1 is composed of four subunits: alpha, beta, delta, and gamma.

Probably plays a role in anchoring the complex to other cellular components. This Prunus avium (Cherry) protein is Elongation factor 1-gamma.